A 359-amino-acid polypeptide reads, in one-letter code: Apelin receptor B (359 aa).

Topologically, residues 1–36 (MNAMDNMTADYSPDYFDDAVNSSMCEYDEWEPSYSL) are extracellular. Residues Asn-6 and Asn-21 are each glycosylated (N-linked (GlcNAc...) asparagine). Intrachain disulfides connect Cys-25-Cys-288 and Cys-107-Cys-186. The chain crosses the membrane as a helical span at residues 37-57 (IPVLYMLIFILGLTGNGVVIF). The Cytoplasmic segment spans residues 58 to 75 (TVWRAQSKRRAADVYIGN). The chain crosses the membrane as a helical span at residues 76 to 96 (LALADLTFVVTLPLWAVYTAL). At 97-108 (GYHWPFGVALCK) the chain is on the extracellular side. The helical transmembrane segment at 109–129 (ISSYVVLLNMYASVFCLTCLS) threads the bilayer. The Cytoplasmic portion of the chain corresponds to 130–151 (LDRYMAIVHSLTSTQLRTRGHM). The chain crosses the membrane as a helical span at residues 152–172 (RASLTAIWLLSGVLAAPTLLF). At 173–213 (RTTVYDVETNRTSCAMDFNLVVSQPGQETYWIAGLSISSTA) the chain is on the extracellular side. N-linked (GlcNAc...) asparagine glycosylation is present at Asn-182. Residues 214–234 (LGFLIPLLAMMVCYGFIGCTV) traverse the membrane as a helical segment. Topologically, residues 235-251 (TRHFNSLRKEDQRKRRL) are cytoplasmic. A helical transmembrane segment spans residues 252–272 (LKIITTLVVVFAACWMPFHVV). The Extracellular segment spans residues 273 to 286 (KTMDALSYLNLAPD). A helical transmembrane segment spans residues 287-307 (SCTFLNLLLLAHPYATCLAYV). The Cytoplasmic segment spans residues 308–359 (NSCLNPLLYAFFDLRFRSQCLCLLNLKKALHASPASSLSSQKTEAQSLATKV).

This sequence belongs to the G-protein coupled receptor 1 family. In terms of tissue distribution, mesendodermal expression at the blastoderm margin appears by 4.5 hpf. At early gastrulation, expression is maintained ventrolaterally while expression in dorsal cells and random deep cells declines. During gastrulation and segmentation, expression is maintained in adaxial, intermediate, and lateral plate mesoderm. During late segmentation, expressed in several regions including the forming heart. By 24 hpf, expressed in the dorsal aorta, caudal vein, and intersomitic blood vessels.

The protein localises to the cell membrane. Its function is as follows. G protein-coupled receptor for peptide hormones apelin (apln) and apelin receptor early endogenous ligand (apela), that plays a role in the regulation of normal cardiovascular function and fluid homeostasis. When acting as apelin receptor, activates both G(i) protein pathway that inhibits adenylate cyclase activity, and the beta-arrestin pathway that promotes internalization of the receptor. Also functions as mechanoreceptor that is activated by pathological stimuli in a G-protein-independent fashion to induce beta-arrestin signaling, hence eliciting cardiac hypertrophy. However, the presence of apelin ligand blunts cardiac hypertrophic induction from APLNR/APJ on response to pathological stimuli. Plays a key role in early development such as gastrulation, blood vessels formation and heart morphogenesis by acting as a receptor for apela hormone, promoting endoderm and mesendoderm cell migration and regulating the migration of cells fated to become myocardial progenitors, respectively. Positively regulates angioblast migration toward the embryonic midline, i.e. the position of the future vessel formation, during vasculogenesis. May promote sinus venosus (SV)-derived endothelial cells migration into the developing heart to promote coronary blood vessel development. Required for cardiovascular development, particularly for intersomitic vein angiogenesis by acting as a receptor for apln hormone. Plays a role in various processes in adults such as regulation of blood vessel formation, blood pressure, heart contractility and heart failure. Acts redundantly with agtrl1a in heart development. G protein-coupled receptor for peptide hormones apelin (APLN) and apelin receptor early endogenous ligand (APELA/ELA), that plays a role in the regulation of normal cardiovascular function and fluid homeostasis. When acting as apelin receptor, activates both G(i) protein pathway that inhibits adenylate cyclase activity, and the beta-arrestin pathway that promotes internalization of the receptor. APLNR/APJ also functions as mechanoreceptor that is activated by pathological stimuli in a G-protein-independent fashion to induce beta-arrestin signaling, hence eliciting cardiac hypertrophy. Plays a key role in early development such as gastrulation, blood vessels formation and heart morphogenesis by acting as a APELA receptor. May promote angioblast migration toward the embryonic midline, i.e. the position of the future vessel formation, during vasculogenesis. Promotes sinus venosus (SV)-derived endothelial cells migration into the developing heart to promote coronary blood vessel development. Also plays a role in various processes in adults such as regulation of blood vessel formation, blood pressure, heart contractility and heart failure. In Danio rerio (Zebrafish), this protein is Apelin receptor B (aplnrb).